We begin with the raw amino-acid sequence, 238 residues long: Aspartate/glutamate leucyltransferase (238 aa).

Belongs to the R-transferase family. Bpt subfamily.

It is found in the cytoplasm. The enzyme catalyses N-terminal L-glutamyl-[protein] + L-leucyl-tRNA(Leu) = N-terminal L-leucyl-L-glutamyl-[protein] + tRNA(Leu) + H(+). The catalysed reaction is N-terminal L-aspartyl-[protein] + L-leucyl-tRNA(Leu) = N-terminal L-leucyl-L-aspartyl-[protein] + tRNA(Leu) + H(+). Functionally, functions in the N-end rule pathway of protein degradation where it conjugates Leu from its aminoacyl-tRNA to the N-termini of proteins containing an N-terminal aspartate or glutamate. This is Aspartate/glutamate leucyltransferase from Aeromonas salmonicida (strain A449).